A 276-amino-acid polypeptide reads, in one-letter code: Phosphonates import ATP-binding protein PhnC (276 aa).

The 245-residue stretch at 2 to 246 folds into the ABC transporter domain; the sequence is LEIHNLQKSY…VLTRIYGAED (245 aa). Residue 35–42 coordinates ATP; that stretch reads GPSGAGKS.

It belongs to the ABC transporter superfamily. Phosphonates importer (TC 3.A.1.9.1) family. The complex is composed of two ATP-binding proteins (PhnC), two transmembrane proteins (PhnE) and a solute-binding protein (PhnD).

It is found in the cell inner membrane. The catalysed reaction is phosphonate(out) + ATP + H2O = phosphonate(in) + ADP + phosphate + H(+). In terms of biological role, part of the ABC transporter complex PhnCDE involved in phosphonates import. Responsible for energy coupling to the transport system. This is Phosphonates import ATP-binding protein PhnC from Alcaligenes faecalis.